The primary structure comprises 548 residues: MFS-type transporter TOXA (548 aa).

The segment covering Met-1–Val-12 has biased composition (polar residues). The disordered stretch occupies residues Met-1 to Pro-33. The span at Asp-14–Val-27 shows a compositional bias: basic and acidic residues. Helical transmembrane passes span Ile-43–Ala-63, Ala-85–Gly-105, Lys-114–Ala-134, Val-146–Val-166, Met-177–Ala-197, Trp-204–Phe-224, Ile-250–Gly-270, Val-280–Trp-300, Gly-316–Tyr-336, Met-357–Phe-377, Ala-382–Phe-402, Ile-411–Ile-431, Tyr-444–Cys-464, and Phe-518–Ala-538.

Belongs to the major facilitator superfamily. TCR/Tet family.

The protein resides in the membrane. MFS-type transporter; part of the diffuse TOX2 gene cluster that mediates the biosynthesis of the HC-toxin, cyclic tetrapeptide of structure cyclo(D-Pro-L-Ala-D-Ala-L-Aeo), where Aeo stands for 2-amino-9,10-epoxi-8-oxodecanoic acid. HC-toxin is a determinant of specificity and virulence in the interaction between the producing fungus and its host, maize. TOXA acts as a HC-toxin efflux pump which contributes to self-protection against HC-toxin and/or the secretion of HC-toxin into the extracellular milieu. This chain is MFS-type transporter TOXA, found in Cochliobolus carbonum (Maize leaf spot fungus).